We begin with the raw amino-acid sequence, 426 residues long: Mothers against decapentaplegic homolog 7 (426 aa).

A disordered region spans residues 14 to 42; the sequence is WRSRAPGGEDEEEGVGGGGGGGELRGEGA. Lys64 and Lys70 each carry N6-acetyllysine; alternate. Glycyl lysine isopeptide (Lys-Gly) (interchain with G-Cter in ubiquitin); alternate cross-links involve residues Lys64 and Lys70. In terms of domain architecture, MH1 spans 64–207; it reads KAVRGAKGHH…LSRLCELESP (144 aa). Positions 67-76 are enriched in basic residues; that stretch reads RGAKGHHHPH. Positions 67–87 are disordered; sequence RGAKGHHHPHPPTSGAGAAGG. Cys125, Cys180, Cys192, and His197 together coordinate Zn(2+). A PY-motif motif is present at residues 208 to 211; it reads PPPY. Residues 208–217 are important for interaction with SMURF2; that stretch reads PPPYSRYPMD. Position 249 is a phosphoserine (Ser249). One can recognise an MH2 domain in the interval 261 to 426; it reads WCVVAYWEEK…CWLEVIFNSR (166 aa).

It belongs to the dwarfin/SMAD family. As to quaternary structure, interacts with COPS5. Interacts with STAMBP. Interacts with PPP1R15A. Interacts with NEDD4L. Interacts with RNF111, AXIN1 and AXIN2. Interacts with ACVR1B, SMURF1, SMURF2 and TGFBR1; SMAD7 recruits SMURF1 and SMURF2 to the TGF-beta receptor and regulates its degradation. Interacts with WWP1. Interacts with PDPK1 (via PH domain). Ubiquitinated by WWP1. Interacts with TSC22D1/TSC-22; the interaction requires TGF-beta and the interaction is inhibited by TGFBR1. Phosphorylation on Ser-249 does not affect its stability, nuclear localization or inhibitory function in TGFB signaling; however it affects its ability to regulate transcription. Phosphorylated by PDPK1. In terms of processing, ubiquitinated by WWP1. Polyubiquitinated by RNF111, which is enhanced by AXIN1 and promotes proteasomal degradation. In response to TGF-beta, ubiquitinated by SMURF1; which promotes its degradation. Ubiquitinated by ARK2C, promoting proteasomal degradation, leading to enhance the BMP-Smad signaling. Post-translationally, acetylation prevents ubiquitination and degradation mediated by SMURF1. In terms of tissue distribution, ubiquitous in various organs, with higher levels in brain and kidney.

It localises to the nucleus. Its subcellular location is the cytoplasm. Antagonist of signaling by TGF-beta (transforming growth factor) type 1 receptor superfamily members; has been shown to inhibit TGF-beta (Transforming growth factor) and activin signaling by associating with their receptors thus preventing SMAD2 access. Functions as an adapter to recruit SMURF2 to the TGF-beta receptor complex. Also acts by recruiting the PPP1R15A-PP1 complex to TGFBR1, which promotes its dephosphorylation. Positively regulates PDPK1 kinase activity by stimulating its dissociation from the 14-3-3 protein YWHAQ which acts as a negative regulator. This chain is Mothers against decapentaplegic homolog 7 (Smad7), found in Mus musculus (Mouse).